A 910-amino-acid chain; its full sequence is Aconitate hydratase A (910 aa).

[4Fe-4S] cluster contacts are provided by Cys-454, Cys-520, and Cys-523.

Belongs to the aconitase/IPM isomerase family. Monomer. Requires [4Fe-4S] cluster as cofactor.

The enzyme catalyses citrate = D-threo-isocitrate. It carries out the reaction (2S,3R)-3-hydroxybutane-1,2,3-tricarboxylate = 2-methyl-cis-aconitate + H2O. Its pathway is carbohydrate metabolism; tricarboxylic acid cycle; isocitrate from oxaloacetate: step 2/2. It functions in the pathway organic acid metabolism; propanoate degradation. Involved in the catabolism of short chain fatty acids (SCFA) via the tricarboxylic acid (TCA)(acetyl degradation route) and probably the 2-methylcitrate cycle I (propionate degradation route). Catalyzes the reversible isomerization of citrate to isocitrate via cis-aconitate. Could catalyze the hydration of 2-methyl-cis-aconitate to yield (2R,3S)-2-methylisocitrate. The apo form of AcnA functions as a RNA-binding regulatory protein. This chain is Aconitate hydratase A (acnA), found in Pseudomonas aeruginosa (strain ATCC 15692 / DSM 22644 / CIP 104116 / JCM 14847 / LMG 12228 / 1C / PRS 101 / PAO1).